Reading from the N-terminus, the 30-residue chain is Dermaseptin-J10 (30 aa).

As to expression, expressed by the skin glands.

It localises to the secreted. Has antimicrobial activity. This chain is Dermaseptin-J10, found in Phasmahyla jandaia (Jandaia leaf frog).